The following is a 42-amino-acid chain: Potassium channel toxin gamma-KTx 1.6 (42 aa).

4 cysteine pairs are disulfide-bonded: cysteine 5–cysteine 23, cysteine 11–cysteine 34, cysteine 20–cysteine 39, and cysteine 24–cysteine 41.

Belongs to the ergtoxin family. Gamma-KTx 1 subfamily. In terms of tissue distribution, expressed by the venom gland.

Its subcellular location is the secreted. Functionally, blocks Kv11/ERG potassium channels. The chain is Potassium channel toxin gamma-KTx 1.6 from Centruroides exilicauda (Bark scorpion).